A 368-amino-acid polypeptide reads, in one-letter code: MLIPLARAVLALELLGAGAAHAERLKDLASIQGVRGNQLIGYGLVVGLDGSGDQVRQTLFTQQSLTNMLSQLGITVPQGSNMQLKNVAAVMVTATLPSFARPGQTVDVVVSSMGNAKSLRGGTLLMTPLKGADNQVYVIAQGNLLVGGAGASAGGSSVQINQLNGGRISNGAIVERAVPTMYAQDGMVYLEMNNTDFGTTQNAATAINRQFGAGTAMALDGRVIQVRGPLDPSMMPAFMSQVENLQVARAPATAKVIINARTGSVVMNRTVMIEEAAVAHGNLSVIINRQNQVFQPDTPFTEGQTVVVPNTQIEVRQDGGALQRVTTSANLADVVKALNALGATPQDLLAILQAMKTAGALRADLEII.

The N-terminal stretch at 1-22 is a signal peptide; sequence MLIPLARAVLALELLGAGAAHA.

The protein belongs to the FlgI family. The basal body constitutes a major portion of the flagellar organelle and consists of four rings (L,P,S, and M) mounted on a central rod.

The protein localises to the periplasm. Its subcellular location is the bacterial flagellum basal body. Assembles around the rod to form the L-ring and probably protects the motor/basal body from shearing forces during rotation. The polypeptide is Flagellar P-ring protein (Bordetella pertussis (strain Tohama I / ATCC BAA-589 / NCTC 13251)).